Here is a 55-residue protein sequence, read N- to C-terminus: Large ribosomal subunit protein bL33 (55 aa).

Positions 1–11 (MAKSGRDKIKL) are enriched in basic and acidic residues. Positions 1 to 27 (MAKSGRDKIKLESTAGTGHFYTTTKNK) are disordered. Residues 14–24 (TAGTGHFYTTT) are compositionally biased toward polar residues.

It belongs to the bacterial ribosomal protein bL33 family.

The sequence is that of Large ribosomal subunit protein bL33 from Herminiimonas arsenicoxydans.